The chain runs to 163 residues: Protein-export protein SecB (163 aa).

This sequence belongs to the SecB family. Homotetramer, a dimer of dimers. One homotetramer interacts with 1 SecA dimer.

It is found in the cytoplasm. In terms of biological role, one of the proteins required for the normal export of preproteins out of the cell cytoplasm. It is a molecular chaperone that binds to a subset of precursor proteins, maintaining them in a translocation-competent state. It also specifically binds to its receptor SecA. The sequence is that of Protein-export protein SecB from Azotobacter vinelandii (strain DJ / ATCC BAA-1303).